The chain runs to 224 residues: Putative cobalt transport protein CbiM (224 aa).

The next 6 helical transmembrane spans lie at 8 to 28, 41 to 61, 75 to 95, 108 to 128, 138 to 158, and 169 to 189; these read LPPLWCLIYYIICIPFIVYGI, AMPMLALSGAFMFILSSLKMP, FGAVFFGPAVVGVLSVIVLVF, LGANVLSMGIIGPLCGYAVWL, EIAMFFTAFVADLMTYVVTAI, and FFTALVTFLGIFAVTQIPLAI.

This sequence belongs to the CbiM family. Forms an energy-coupling factor (ECF) transporter complex composed of an ATP-binding protein (A component, CbiO), a transmembrane protein (T component, CbiQ) and 2 possible substrate-capture proteins (S components, CbiM and CbiN) of unknown stoichimetry.

The protein resides in the cell membrane. It participates in cofactor biosynthesis; adenosylcobalamin biosynthesis. Its function is as follows. Part of the energy-coupling factor (ECF) transporter complex CbiMNOQ involved in cobalt import. This is Putative cobalt transport protein CbiM from Methanosphaera stadtmanae (strain ATCC 43021 / DSM 3091 / JCM 11832 / MCB-3).